A 369-amino-acid chain; its full sequence is Small RNA 2'-O-methyltransferase (369 aa).

Serine 39, aspartate 57, and serine 93 together coordinate S-adenosyl-L-methionine. Mg(2+)-binding residues include glutamate 111, glutamate 114, histidine 115, and histidine 161.

Belongs to the methyltransferase superfamily. HEN1 family. The cofactor is Mg(2+).

Its subcellular location is the cytoplasm. It carries out the reaction small RNA 3'-end nucleotide + S-adenosyl-L-methionine = small RNA 3'-end 2'-O-methylnucleotide + S-adenosyl-L-homocysteine + H(+). Its function is as follows. Methyltransferase that adds a 2'-O-methyl group at the 3'-end of piRNAs, a class of 24 to 30 nucleotide RNAs that are generated by a Dicer-independent mechanism and are primarily derived from transposons and other repeated sequence elements. This probably protects the 3'-end of piRNAs from uridylation activity and subsequent degradation. Stabilization of piRNAs is essential for gametogenesis. The sequence is that of Small RNA 2'-O-methyltransferase (henmt1) from Xenopus tropicalis (Western clawed frog).